The primary structure comprises 402 residues: Rubredoxin-oxygen oxidoreductase (402 aa).

Residues 30-216 (PMGTTYNAYL…KAIETLVGAG (187 aa)) are zinc metallo-hydrolase. Fe cation is bound by residues His-79, Glu-81, Asp-83, His-146, Asp-165, and His-226. In terms of domain architecture, Flavodoxin-like spans 255–393 (VVIFYDSMWH…QLKTMAQTIA (139 aa)).

The protein in the N-terminal section; belongs to the zinc metallo-hydrolase group 3 family. In terms of assembly, homodimer. It depends on FMN as a cofactor. Fe cation is required as a cofactor.

The protein operates within energy metabolism; electron transfer. Its function is as follows. Catalyzes the four-electron reduction of one oxygen molecule to two water molecules. The protein is Rubredoxin-oxygen oxidoreductase (roo) of Megalodesulfovibrio gigas (strain ATCC 19364 / DSM 1382 / NCIMB 9332 / VKM B-1759) (Desulfovibrio gigas).